A 279-amino-acid polypeptide reads, in one-letter code: Putative biopolymer transport protein ExbB homolog (279 aa).

3 helical membrane passes run 19–39 (SGGV…ITAL), 126–146 (IIEV…WYTF), and 162–182 (IYVA…LMPL).

This sequence belongs to the ExbB/TolQ family.

It is found in the cell membrane. This is Putative biopolymer transport protein ExbB homolog from Methanothermobacter thermautotrophicus (strain ATCC 29096 / DSM 1053 / JCM 10044 / NBRC 100330 / Delta H) (Methanobacterium thermoautotrophicum).